The following is a 162-amino-acid chain: Interleukin-15 (162 aa).

An N-terminal signal peptide occupies residues 1–29 (MKILKPYMRNTSISCYLCFLLNSHFLTEA). Residues 30 to 48 (GIHVFILGCVSVGLPKTEA) constitute a propeptide that is removed on maturation. Cystine bridges form between Cys-83–Cys-133 and Cys-90–Cys-136. N-linked (GlcNAc...) asparagine glycosylation is found at Asn-104, Asn-108, and Asn-119.

Belongs to the IL-15/IL-21 family.

It localises to the secreted. Functionally, cytokine that plays a major role in the development of inflammatory and protective immune responses to microbial invaders and parasites by modulating immune cells of both the innate and adaptive immune systems. Stimulates the proliferation and activation of natural killer cells, T-cells and B-cells and promotes the secretion of several cytokines. In monocytes, induces the production of IL8 and monocyte chemotactic protein 1/CCL2, two chemokines that attract neutrophils and monocytes respectively to sites of infection. Unlike most cytokines, which are secreted in soluble form, IL15 is expressed in association with its high affinity IL15RA on the surface of IL15-producing cells and delivers signals to target cells that express IL2RB and IL2RG receptor subunits. Binding to its receptor triggers the phosphorylation of JAK1 and JAK3 and the recruitment and subsequent phosphorylation of signal transducer and activator of transcription-3/STAT3 and STAT5. In mast cells, induces the rapid tyrosine phosphorylation of STAT6 and thereby controls mast cell survival and release of cytokines such as IL4. This Mus musculus (Mouse) protein is Interleukin-15 (Il15).